A 278-amino-acid polypeptide reads, in one-letter code: HTH-type transcriptional activator RhaS (278 aa).

The region spanning 174–272 (NQLMAWLEDH…NWSPRDIRQG (99 aa)) is the HTH araC/xylS-type domain. DNA-binding regions (H-T-H motif) lie at residues 191–212 (EAVA…KQHT) and 239–262 (VTEI…RREF).

Binds DNA as a dimer.

The protein localises to the cytoplasm. In terms of biological role, activates expression of the rhaBAD and rhaT operons. The protein is HTH-type transcriptional activator RhaS of Salmonella agona (strain SL483).